A 324-amino-acid polypeptide reads, in one-letter code: HPr kinase/phosphorylase (324 aa).

Catalysis depends on residues H146 and K167. Residue 161–168 participates in ATP binding; the sequence is GDSGLGKS. Residue S168 participates in Mg(2+) binding. Catalysis depends on D185, which acts as the Proton acceptor; for phosphorylation activity. Proton donor; for dephosphorylation activity. The important for the catalytic mechanism of both phosphorylation and dephosphorylation stretch occupies residues 209 to 218; it reads LEVRGLGLLD. E210 contributes to the Mg(2+) binding site. The active site involves R250. The tract at residues 271 to 276 is important for the catalytic mechanism of dephosphorylation; it reads QVAAGR.

Belongs to the HPrK/P family. As to quaternary structure, homohexamer. Requires Mg(2+) as cofactor.

The enzyme catalyses [HPr protein]-L-serine + ATP = [HPr protein]-O-phospho-L-serine + ADP + H(+). It carries out the reaction [HPr protein]-O-phospho-L-serine + phosphate + H(+) = [HPr protein]-L-serine + diphosphate. Catalyzes the ATP- as well as the pyrophosphate-dependent phosphorylation of a specific serine residue in HPr, a phosphocarrier protein of the phosphoenolpyruvate-dependent sugar phosphotransferase system (PTS). HprK/P also catalyzes the pyrophosphate-producing, inorganic phosphate-dependent dephosphorylation (phosphorolysis) of seryl-phosphorylated HPr (P-Ser-HPr). This chain is HPr kinase/phosphorylase, found in Ralstonia nicotianae (strain ATCC BAA-1114 / GMI1000) (Ralstonia solanacearum).